The chain runs to 133 residues: ATP synthase epsilon chain, chloroplastic (133 aa).

This sequence belongs to the ATPase epsilon chain family. In terms of assembly, F-type ATPases have 2 components, CF(1) - the catalytic core - and CF(0) - the membrane proton channel. CF(1) has five subunits: alpha(3), beta(3), gamma(1), delta(1), epsilon(1). CF(0) has three main subunits: a, b and c.

Its subcellular location is the plastid. The protein resides in the chloroplast thylakoid membrane. In terms of biological role, produces ATP from ADP in the presence of a proton gradient across the membrane. This is ATP synthase epsilon chain, chloroplastic from Daucus carota (Wild carrot).